A 100-amino-acid chain; its full sequence is Large ribosomal subunit protein uL23 (100 aa).

Belongs to the universal ribosomal protein uL23 family. Part of the 50S ribosomal subunit. Contacts protein L29, and trigger factor when it is bound to the ribosome.

Functionally, one of the early assembly proteins it binds 23S rRNA. One of the proteins that surrounds the polypeptide exit tunnel on the outside of the ribosome. Forms the main docking site for trigger factor binding to the ribosome. The sequence is that of Large ribosomal subunit protein uL23 from Photorhabdus laumondii subsp. laumondii (strain DSM 15139 / CIP 105565 / TT01) (Photorhabdus luminescens subsp. laumondii).